The following is a 190-amino-acid chain: MFKSTLAAMAAVFALSALSPAAMAAKGDPHVLLTTSAGNIELELDKQKAPVSVQNFVDYVNSGFYNNTTFHRVIPGFMIQGGGFTEQMQQKKPNPPIKNEADNGLRNTRGTIAMARTADKDSATSQFFINVADNAFLDHGQRDFGYAVFGKVVKGMDVADKISQVPTHDVGPYQNVPSKPVVILSAKVLP.

The N-terminal stretch at 1–24 (MFKSTLAAMAAVFALSALSPAAMA) is a signal peptide. The PPIase cyclophilin-type domain maps to 27-188 (GDPHVLLTTS…KPVVILSAKV (162 aa)).

The protein belongs to the cyclophilin-type PPIase family.

Its subcellular location is the periplasm. It catalyses the reaction [protein]-peptidylproline (omega=180) = [protein]-peptidylproline (omega=0). PPIases accelerate the folding of proteins. It catalyzes the cis-trans isomerization of proline imidic peptide bonds in oligopeptides. The polypeptide is Peptidyl-prolyl cis-trans isomerase A (ppiA) (Escherichia coli O157:H7).